We begin with the raw amino-acid sequence, 40 residues long: SLALAGTIIEGASLTFSVLTTILDALGSVSRKIDVGVYNE.

Residues 3–12 (ALAGTIIEGA) form a plays an important role in the hemolytic activity region. The segment at 11 to 30 (GASLTFSVLTTILDALGSVS) is N-terminal region.

The protein belongs to the actinoporin family. Sea anemone subfamily. Octamer or nonamer in membranes. Monomer in the soluble state.

The protein localises to the secreted. The protein resides in the nematocyst. It is found in the target cell membrane. In terms of biological role, pore-forming protein that forms cations-selective hydrophilic pores of around 1 nm and causes cytolysis. Pore formation is a multi-step process that involves specific recognition of membrane sphingomyelin (but neither cholesterol nor phosphatidylcholine) using aromatic rich region and adjacent phosphocholine (POC) binding site, firm binding to the membrane (mainly driven by hydrophobic interactions) accompanied by the transfer of the N-terminal region to the lipid-water interface and finally pore formation after oligomerization of monomers. This toxin shows hemolytic activities. This chain is Cytolysin EnT, found in Entacmaea quadricolor (Bubble-tip anemone).